Here is a 126-residue protein sequence, read N- to C-terminus: MSAPNPKAFPLADEKLSQQILDVVQQAANLRQLKKGANEATKTLNRGISEFIIMAADCEPIEILLHLPLLCEDKNVPYVFVPSRVALGRACGVSRPVIAASITTNDASAIKNQIYAVKDKIETLLI.

The protein belongs to the eukaryotic ribosomal protein eL8 family. Component of the U3 snoRNP particle. Binds to the C'/D and B/C motifs in U3 snoRNA. Component of the 25S U4/U6.U5 tri-snRNP particle, a subcomplex of the spliceosome. Binds to the 5' stem-loop of U4 snRNA.

The protein resides in the nucleus. It is found in the nucleolus. Functionally, common component of the spliceosome and rRNA processing machinery. In association with the spliceosomal U4/U6.U5 tri-snRNP particle, required for splicing of pre-mRNA. In association with box C/D snoRNPs, required for processing of pre-ribosomal RNA (rRNA) and site-specific 2'-O-methylation of substrate RNAs. Essential for the accumulation and stability of U4 snRNA, U6 snRNA, and box C/D snoRNAs. In Candida glabrata (strain ATCC 2001 / BCRC 20586 / JCM 3761 / NBRC 0622 / NRRL Y-65 / CBS 138) (Yeast), this protein is 13 kDa ribonucleoprotein-associated protein (SNU13).